The sequence spans 944 residues: Weak acid resistance protein 1 (944 aa).

Positions 76–109 form a DNA-binding region, zn(2)-C6 fungal-type; the sequence is CVCCHSLKQKCEPSDVNDIYRKPCRRCLKHKKLC. Disordered regions lie at residues 114–171 and 197–225; these read SKRT…AKQF and SYGA…SVPT. At Thr-128 the chain carries Phosphothreonine. Composition is skewed to polar residues over residues 135–144 and 205–225; these read VNVSTKSKGP and TTST…SVPT.

In terms of assembly, homodimer. Post-translationally, phosphorylation is required for PDR12 induction.

The protein localises to the nucleus. Functionally, transcription factor which binds to a weak acid response element (WARE) to mediate stress induction of PDR12 and FUN34, encoding an acid transporter and a putative ammonia transporter, respectively. This Saccharomyces cerevisiae (strain ATCC 204508 / S288c) (Baker's yeast) protein is Weak acid resistance protein 1 (WAR1).